Here is a 306-residue protein sequence, read N- to C-terminus: Protein FdhE homolog (306 aa).

The protein belongs to the FdhE family.

It localises to the cytoplasm. Its function is as follows. Necessary for formate dehydrogenase activity. The protein is Protein FdhE homolog of Glaesserella parasuis serovar 5 (strain SH0165) (Haemophilus parasuis).